The primary structure comprises 616 residues: Chaperone protein HscA (616 aa).

Belongs to the heat shock protein 70 family.

Chaperone involved in the maturation of iron-sulfur cluster-containing proteins. Has a low intrinsic ATPase activity which is markedly stimulated by HscB. Involved in the maturation of IscU. This is Chaperone protein HscA from Proteus mirabilis (strain HI4320).